Consider the following 313-residue polypeptide: Porphobilinogen deaminase (313 aa).

Residue cysteine 242 is modified to S-(dipyrrolylmethanemethyl)cysteine.

It belongs to the HMBS family. Monomer. The cofactor is dipyrromethane.

It catalyses the reaction 4 porphobilinogen + H2O = hydroxymethylbilane + 4 NH4(+). It participates in porphyrin-containing compound metabolism; protoporphyrin-IX biosynthesis; coproporphyrinogen-III from 5-aminolevulinate: step 2/4. Tetrapolymerization of the monopyrrole PBG into the hydroxymethylbilane pre-uroporphyrinogen in several discrete steps. This chain is Porphobilinogen deaminase, found in Klebsiella pneumoniae subsp. pneumoniae (strain ATCC 700721 / MGH 78578).